The sequence spans 442 residues: MAGEGDQQDAAHNMGNHLPLLPAESEEEDEMEVEDQDSKEAKKPNIINFDTSLPTSHTYLGADMEEFHGRTLHDDDSCQVIPVLPQVMMILIPGQTLPLQLFHPQEVSMVRNLIQKDRTFAVLAYSNVQEREAQFGTTAEIYAYREEQDFGIEIVKVKAIGRQRFKVLELRTQSDGIQQAKVQILPECVLPSTMSAVQLESLNKCQIFPSKPVSREDQCSYKWWQKYQKRKFHCANLTSWPRWLYSLYDAETLMDRIKKQLREWDENLKDDSLPSNPIDFSYRVAACLPIDDVLRIQLLKIGSAIQRLRCELDIMNKCTSLCCKQCQETEITTKNEIFSLSLCGPMAAYVNPHGYVHETLTVYKACNLNLIGRPSTEHSWFPGYAWTVAQCKICASHIGWKFTATKKDMSPQKFWGLTRSALLPTIPDTEDEISPDKVILCL.

Positions 1-45 (MAGEGDQQDAAHNMGNHLPLLPAESEEEDEMEVEDQDSKEAKKPN) are disordered. The segment covering 24–35 (ESEEEDEMEVED) has biased composition (acidic residues). Position 25 is a phosphoserine (Ser-25). Residues 81 to 319 (IPVLPQVMMI…CELDIMNKCT (239 aa)) enclose the Lon N-terminal domain. In terms of domain architecture, CULT spans 318–426 (CTSLCCKQCQ…LTRSALLPTI (109 aa)). Zn(2+) is bound by residues Cys-323 and Cys-326. Positions 378, 380, and 386 each coordinate (S)-thalidomide. Residues Cys-391 and Cys-394 each contribute to the Zn(2+) site.

Belongs to the CRBN family. In terms of assembly, interacts with KCNT1. Component of a DCX (DDB1-CUL4-X-box) protein ligase complex, at least composed of CRBN, CUL4A, DDB1 and RBX1. Interacts directly with DDB1. Interacts (in pomalidomide-bound form) with IKZF1 and IKZF3. Interacts with ILF2. Interacts with TRAF6 and ECSIT. In terms of processing, ubiquitinated, ubiquitination is mediated by its own DCX protein ligase complex. As to expression, widely expressed. Highly expressed in brain.

It is found in the cytoplasm. The protein localises to the nucleus. It localises to the membrane. Its pathway is protein modification; protein ubiquitination. Substrate recognition component of a DCX (DDB1-CUL4-X-box) E3 protein ligase complex that mediates the ubiquitination and subsequent proteasomal degradation of target proteins, such as MEIS2, ILF2 or GLUL. Normal degradation of key regulatory proteins is required for normal limb outgrowth and expression of the fibroblast growth factor FGF8. Maintains presynaptic glutamate release and consequently cognitive functions, such as memory and learning, by negatively regulating large-conductance calcium-activated potassium (BK) channels in excitatory neurons. Likely to function by regulating the assembly and neuronal surface expression of BK channels via its interaction with KCNT1. May also be involved in regulating anxiety-like behaviors via a BK channel-independent mechanism. Plays a negative role in TLR4 signaling by interacting with TRAF6 and ECSIT, leading to inhibition of ECSIT ubiquitination, an important step of the signaling. In Homo sapiens (Human), this protein is Protein cereblon (CRBN).